We begin with the raw amino-acid sequence, 194 residues long: Peptidyl-tRNA hydrolase (194 aa).

Tyr17 is a binding site for tRNA. His22 acts as the Proton acceptor in catalysis. TRNA is bound by residues Phe68, Asn70, and Asn116.

It belongs to the PTH family. In terms of assembly, monomer.

It localises to the cytoplasm. The catalysed reaction is an N-acyl-L-alpha-aminoacyl-tRNA + H2O = an N-acyl-L-amino acid + a tRNA + H(+). Its function is as follows. Hydrolyzes ribosome-free peptidyl-tRNAs (with 1 or more amino acids incorporated), which drop off the ribosome during protein synthesis, or as a result of ribosome stalling. Catalyzes the release of premature peptidyl moieties from peptidyl-tRNA molecules trapped in stalled 50S ribosomal subunits, and thus maintains levels of free tRNAs and 50S ribosomes. This chain is Peptidyl-tRNA hydrolase, found in Haemophilus ducreyi (strain 35000HP / ATCC 700724).